A 546-amino-acid polypeptide reads, in one-letter code: MFS-type transporter patC (546 aa).

Residues 1–15 (MSIDASPSESVLESQ) show a composition bias toward polar residues. The disordered stretch occupies residues 1–29 (MSIDASPSESVLESQTPDRVDESIPIKAE). The segment covering 16-29 (TPDRVDESIPIKAE) has biased composition (basic and acidic residues). The next 14 helical transmembrane spans lie at 41 to 61 (IVGFRWLLVCIAVFSANLLYG), 89 to 109 (VGFTLGSVVFILPLGKAYAIF), 113 to 133 (WLFLGCLTMFAAGSALCGAAP), 143 to 163 (VWAGAGGAGMYLGNLNLITIL), 171 to 191 (VYVGLVGLIYGTGCILGPIIG), 203 to 223 (WSFYLNLVIFGVMSPIYVFLL), 245 to 265 (WVGTVLSAGMHISIILFIVFG), 277 to 297 (IALYVVSAVLTIAFVLSQYFC), 318 to 338 (LLLYIIMACGGAALFVAVYYI), 350 to 370 (GIMSAVRLLPFVCFYVATILL), 379 to 399 (GYFIIWYLMSGVFMLIGAVLM), 416 to 436 (ILMGLGMTTTQAAYAVGPAIV), 447 to 467 (FMNIGQGQSQLLGLAIASAIF), and 515 to 535 (VIVSSISDVYVMAISAGALYV).

It belongs to the major facilitator superfamily. TCR/Tet family.

The protein localises to the vacuole membrane. Its subcellular location is the cell membrane. MFS-type transporter; part of the gene cluster that mediates the biosynthesis of patulin, an acetate-derived tetraketide mycotoxin produced by several fungal species that shows antimicrobial properties against several bacteria. May be involved in the secretion of E-ascladiol to be converted to patulin by the secreted patulin synthase patE. In Penicillium expansum (Blue mold rot fungus), this protein is MFS-type transporter patC.